The following is a 324-amino-acid chain: Nucleotide-binding protein GbCGDNIH1_0395 (324 aa).

14-21 provides a ligand contact to ATP; the sequence is GLSGAGKS. 59-62 lines the GTP pocket; it reads DARS. Residues 286–324 form a disordered region; sequence ISDDAPQAGAARVSTDDRNGRPEEHGSAQAPDELSRTTS. The segment covering 299 to 311 has biased composition (basic and acidic residues); the sequence is STDDRNGRPEEHG.

Belongs to the RapZ-like family.

Functionally, displays ATPase and GTPase activities. This chain is Nucleotide-binding protein GbCGDNIH1_0395, found in Granulibacter bethesdensis (strain ATCC BAA-1260 / CGDNIH1).